The following is a 148-amino-acid chain: MASIDRFQVMQEPELKILEHWFENEDTRRRMDGMLLLDEWYARVNKDKHDTVIMAYDGQLPAGMVVIEFGEERTYIGLIVNPLYRLKGYGKQILQKLMTEPDFTSVREWVACIEEDNRISLACFQAAGFTLEDTEPDEDGFLTLILRN.

The 141-residue stretch at 8–148 folds into the N-acetyltransferase domain; the sequence is QVMQEPELKI…DGFLTLILRN (141 aa).

This sequence belongs to the acetyltransferase family.

This is an uncharacterized protein from Bacillus subtilis (strain 168).